A 321-amino-acid polypeptide reads, in one-letter code: MQGHVTDQQTRLSEALKRRAAEEGFNPVGIARIPGSPRLQLRTKALQRWLDHGHQADMAWMAAPRRRDPRLLLDGANSVLAVGLNYYVDAQPSPGSLKVARYGWGRDYHRVVDQRLRRIGRWLSEQRPDCGWRACVDATPLLDKAWAEEAGLGWIGKHSNLIHPERGSWMVIGHLLTTEPLNADPPARSLCGRCSACIDACPTHAIREPFVVDARRCLAFHTIENREDDLPENIRAALGSWVAGCDICQDVCPWNHRSLPQSNDPDMQPRPWLLNLHKEEIQTWDDSVWEQKLRGSALRRIKPWMWRRNAAAAQPDPTPTL.

Catalysis depends on Asp-137, which acts as the Proton donor. One can recognise a 4Fe-4S ferredoxin-type domain in the interval 179–211 (EPLNADPPARSLCGRCSACIDACPTHAIREPFV). The [4Fe-4S] cluster site is built by Cys-191, Cys-194, Cys-197, Cys-201, Cys-217, Cys-245, Cys-248, and Cys-252.

The protein belongs to the QueG family. As to quaternary structure, monomer. It depends on cob(II)alamin as a cofactor. [4Fe-4S] cluster serves as cofactor.

Its subcellular location is the cytoplasm. It catalyses the reaction epoxyqueuosine(34) in tRNA + AH2 = queuosine(34) in tRNA + A + H2O. Its pathway is tRNA modification; tRNA-queuosine biosynthesis. Catalyzes the conversion of epoxyqueuosine (oQ) to queuosine (Q), which is a hypermodified base found in the wobble positions of tRNA(Asp), tRNA(Asn), tRNA(His) and tRNA(Tyr). The polypeptide is Epoxyqueuosine reductase (Synechococcus sp. (strain CC9605)).